The chain runs to 223 residues: Glutathione S-transferase Z2 (223 aa).

Positions 10 to 91 constitute a GST N-terminal domain; that stretch reads AKLKLYSYWR…YLDDKYPEPP (82 aa). Glutathione contacts are provided by residues 20 to 21, 20 to 25, glutamine 49, 49 to 50, 62 to 63, valine 63, 75 to 76, glutamine 115, and 119 to 121; these read SS, SSCAHR, QS, TV, DS, and NMA. The region spanning 96 to 221 is the GST C-terminal domain; sequence DYHKRAVNYQ…VPEKQPDTPS (126 aa).

This sequence belongs to the GST superfamily. Zeta family.

The protein resides in the cytoplasm. It localises to the cytosol. It carries out the reaction RX + glutathione = an S-substituted glutathione + a halide anion + H(+). Its function is as follows. May be involved in the conjugation of reduced glutathione to a wide number of exogenous and endogenous hydrophobic electrophiles and have a detoxification role against certain herbicides. The protein is Glutathione S-transferase Z2 (GSTZ2) of Arabidopsis thaliana (Mouse-ear cress).